Reading from the N-terminus, the 91-residue chain is Small ribosomal subunit protein uS15c (91 aa).

This sequence belongs to the universal ribosomal protein uS15 family. In terms of assembly, part of the 30S ribosomal subunit.

The protein localises to the plastid. Its subcellular location is the chloroplast. The sequence is that of Small ribosomal subunit protein uS15c (rps15) from Adiantum capillus-veneris (Maidenhair fern).